A 156-amino-acid polypeptide reads, in one-letter code: Maintenance of carboxysome distribution protein B (156 aa).

The segment at 1-55 (MSNNALDRLINKQKPKVPPRNDVVSESVSNDIKTQGQQELNTSLPPSDTKATPEE) is required for interaction with McdA:DNA complex. A disordered region spans residues 1 to 79 (MSNNALDRLI…QKPKLSPDTF (79 aa)). The span at 24–50 (VSESVSNDIKTQGQQELNTSLPPSDTK) shows a compositional bias: polar residues. A compositionally biased stretch (basic and acidic residues) spans 51–63 (ATPEEMPTSHESE). Residues 122-156 (PEELAQVIQLAQERLSQRKAIADYKRAKTMQERFL) are a coiled coil.

Homodimerizes; may exist in higher order oligomers in solution. Forms a complex with McdA:DNA. Homohexamerizes, interacts with shell components of the carboxysome.

It localises to the carboxysome. Its function is as follows. McdA and McdB together mediate carboxysome (Cb) spacing, size, ultrastructure and probably inheritance in the cell, together they prevent Cb aggregation. McdA is an ATPase that forms dynamic gradients on the nucleoid in response to adapter protein McdB, which associates with carboxysomes. The interplay between McdA gradients on the nucleoid and McdB-bound carboxysomes result in the equal spacing of Cbs along the cell length. Stimulates the ATPase activity of McdA, causing McdA to be released from DNA. Undergoes liquid-liquid phase separation. Incorrect positioning (aggregation) of carboxysomes results in reduced CO(2) fixation by encapsulated ribulose-1,5-bisphosphate carboxylase (RuBisCO, cbbL/cbbS), which leads to slower growth. The protein is Maintenance of carboxysome distribution protein B of Gloeothece citriformis (strain PCC 7424) (Cyanothece sp. (strain PCC 7424)).